The sequence spans 956 residues: DNA replication helicase (956 aa).

Position 120 to 127 (120 to 127 (GTAGAGKT)) interacts with ATP. The tract at residues 658-694 (PINNHVDADSSQGGQSVPVSQRMEHGQEETHDIPCLS) is disordered. Positions 667–678 (SSQGGQSVPVSQ) are enriched in low complexity. The span at 679-694 (RMEHGQEETHDIPCLS) shows a compositional bias: basic and acidic residues.

This sequence belongs to the herpesviridae helicase family. As to quaternary structure, associates with the primase and the primase-associated factor to form the helicase-primase complex.

The protein resides in the host nucleus. Functionally, component of the helicase/primase complex. Unwinds the DNA at the replication forks and generates single-stranded DNA for both leading and lagging strand synthesis. The primase synthesizes short RNA primers on the lagging strand that the polymerase elongates using dNTPs. Possesses helicase-like motifs and therefore may act as the helicase subunit of the complex. The polypeptide is DNA replication helicase (Human cytomegalovirus (strain Merlin) (HHV-5)).